Reading from the N-terminus, the 363-residue chain is Putative glutamate--cysteine ligase 2 (363 aa).

This sequence belongs to the glutamate--cysteine ligase type 2 family. YbdK subfamily.

The catalysed reaction is L-cysteine + L-glutamate + ATP = gamma-L-glutamyl-L-cysteine + ADP + phosphate + H(+). Functionally, ATP-dependent carboxylate-amine ligase which exhibits weak glutamate--cysteine ligase activity. The polypeptide is Putative glutamate--cysteine ligase 2 (Streptomyces coelicolor (strain ATCC BAA-471 / A3(2) / M145)).